Here is a 129-residue protein sequence, read N- to C-terminus: NADH-quinone oxidoreductase subunit A (129 aa).

3 helical membrane-spanning segments follow: residues 14–34 (LAIH…VAAL), 67–87 (FLIA…FAWA), and 95–115 (WFGL…LVYL).

It belongs to the complex I subunit 3 family. NDH-1 is composed of 14 different subunits. Subunits NuoA, H, J, K, L, M, N constitute the membrane sector of the complex.

It localises to the cell inner membrane. It carries out the reaction a quinone + NADH + 5 H(+)(in) = a quinol + NAD(+) + 4 H(+)(out). In terms of biological role, NDH-1 shuttles electrons from NADH, via FMN and iron-sulfur (Fe-S) centers, to quinones in the respiratory chain. The immediate electron acceptor for the enzyme in this species is believed to be ubiquinone. Couples the redox reaction to proton translocation (for every two electrons transferred, four hydrogen ions are translocated across the cytoplasmic membrane), and thus conserves the redox energy in a proton gradient. The sequence is that of NADH-quinone oxidoreductase subunit A from Rhodopseudomonas palustris (strain HaA2).